The sequence spans 144 residues: Grifin (144 aa).

The Galectin domain occupies 5 to 133 (SKAFCAGGLA…DHCLAQVELA (129 aa)). At Ser138 the chain carries Phosphoserine.

In terms of assembly, homodimer. In terms of tissue distribution, not detected in lens.

In Homo sapiens (Human), this protein is Grifin (GRIFIN).